Reading from the N-terminus, the 127-residue chain is Large ribosomal subunit protein bL21c (127 aa).

This sequence belongs to the bacterial ribosomal protein bL21 family. Part of the 50S ribosomal subunit.

Its subcellular location is the plastid. It localises to the chloroplast. This protein binds to 23S rRNA. This chain is Large ribosomal subunit protein bL21c, found in Adiantum capillus-veneris (Maidenhair fern).